Consider the following 156-residue polypeptide: Ribonuclease H (156 aa).

The RNase H type-1 domain maps to 2-144; that stretch reads TMKNVQAFTD…CDVLARTQAS (143 aa). Residues Asp11, Glu49, Asp71, and Asp136 each coordinate Mg(2+).

The protein belongs to the RNase H family. As to quaternary structure, monomer. It depends on Mg(2+) as a cofactor.

It is found in the cytoplasm. The catalysed reaction is Endonucleolytic cleavage to 5'-phosphomonoester.. Its function is as follows. Endonuclease that specifically degrades the RNA of RNA-DNA hybrids. The protein is Ribonuclease H of Nitratidesulfovibrio vulgaris (strain DSM 19637 / Miyazaki F) (Desulfovibrio vulgaris).